The chain runs to 150 residues: Phosphoribosyl-AMP cyclohydrolase (150 aa).

Aspartate 93 provides a ligand contact to Mg(2+). A Zn(2+)-binding site is contributed by cysteine 94. 2 residues coordinate Mg(2+): aspartate 95 and aspartate 97. Residues cysteine 112 and cysteine 119 each contribute to the Zn(2+) site.

This sequence belongs to the PRA-CH family. As to quaternary structure, homodimer. It depends on Mg(2+) as a cofactor. Requires Zn(2+) as cofactor.

The protein localises to the cytoplasm. The catalysed reaction is 1-(5-phospho-beta-D-ribosyl)-5'-AMP + H2O = 1-(5-phospho-beta-D-ribosyl)-5-[(5-phospho-beta-D-ribosylamino)methylideneamino]imidazole-4-carboxamide. It functions in the pathway amino-acid biosynthesis; L-histidine biosynthesis; L-histidine from 5-phospho-alpha-D-ribose 1-diphosphate: step 3/9. Catalyzes the hydrolysis of the adenine ring of phosphoribosyl-AMP. This chain is Phosphoribosyl-AMP cyclohydrolase, found in Rhizobium etli (strain CIAT 652).